A 623-amino-acid chain; its full sequence is V-type proton ATPase catalytic subunit A (623 aa).

252–259 lines the ATP pocket; the sequence is GAFGCGKT.

It belongs to the ATPase alpha/beta chains family. As to quaternary structure, V-ATPase is a heteromultimeric enzyme composed of a peripheral catalytic V1 complex (main components: subunits A, B, C, D, E, and F) attached to an integral membrane V0 proton pore complex (main component: the proteolipid protein).

It catalyses the reaction ATP + H2O + 4 H(+)(in) = ADP + phosphate + 5 H(+)(out). In terms of biological role, catalytic subunit of the peripheral V1 complex of vacuolar ATPase. V-ATPase vacuolar ATPase is responsible for acidifying a variety of intracellular compartments in eukaryotic cells. The polypeptide is V-type proton ATPase catalytic subunit A (Brassica napus (Rape)).